The chain runs to 368 residues: Type 2 DNA topoisomerase 6 subunit A (368 aa).

Residues 9–148 (PDTEEAREQL…FHMRPEESGA (140 aa)) form the Topo IIA-type catalytic domain. The O-(5'-phospho-DNA)-tyrosine intermediate role is filled by tyrosine 103. Mg(2+) is bound by residues glutamate 201 and aspartate 253.

Belongs to the TOP6A family. Homodimer. Heterotetramer of two Top6A and two Top6B chains. The cofactor is Mg(2+).

The catalysed reaction is ATP-dependent breakage, passage and rejoining of double-stranded DNA.. Its function is as follows. Relaxes both positive and negative superturns and exhibits a strong decatenase activity. This chain is Type 2 DNA topoisomerase 6 subunit A, found in Haloarcula marismortui (strain ATCC 43049 / DSM 3752 / JCM 8966 / VKM B-1809) (Halobacterium marismortui).